A 367-amino-acid chain; its full sequence is MSLADSVLAVNNDLPIRTDNPVHSGKVRSVYWLTDADSRRLIQTKGYNVPEDTPLAIMVISDRISAFDCIFHGEGGLKGIPGKGAALNAISNHWFKLFAENGLADSHILDIPHPFVWIVQKARPIKVEAICRQYITGSMWRAYSKGERVFCGITLPEGLEKDQKLPDLLITPSTKGILTGIPGVPAQDDVNISRSDIEANYQAFGFEKVEDIDLYEKLLKDGFKVIAKALADLDQVFVDTKFEFGYVTDKNGNSKLIYMDEVGTPDSSRIWDGAAYRDGKILENSKEGFRQFLLNHFPDPDILLNKDRMPEREALARDNALPLEAMMDVSRTYTGIAEKVTGAAIPLPANPKADIIKILREEYDLIV.

This sequence belongs to the SAICAR synthetase family.

The catalysed reaction is 5-amino-1-(5-phospho-D-ribosyl)imidazole-4-carboxylate + L-aspartate + ATP = (2S)-2-[5-amino-1-(5-phospho-beta-D-ribosyl)imidazole-4-carboxamido]succinate + ADP + phosphate + 2 H(+). Its pathway is purine metabolism; IMP biosynthesis via de novo pathway; 5-amino-1-(5-phospho-D-ribosyl)imidazole-4-carboxamide from 5-amino-1-(5-phospho-D-ribosyl)imidazole-4-carboxylate: step 1/2. This Shewanella sp. (strain MR-4) protein is Phosphoribosylaminoimidazole-succinocarboxamide synthase.